Consider the following 123-residue polypeptide: Large ribosomal subunit protein bL17 (123 aa).

It belongs to the bacterial ribosomal protein bL17 family. As to quaternary structure, part of the 50S ribosomal subunit. Contacts protein L32.

This Exiguobacterium sibiricum (strain DSM 17290 / CCUG 55495 / CIP 109462 / JCM 13490 / 255-15) protein is Large ribosomal subunit protein bL17.